The chain runs to 362 residues: Bifunctional nitrilase/nitrile hydratase NIT4 (362 aa).

The region spanning 31 to 307 is the CN hydrolase domain; that stretch reads VRATVVQAST…EALITADLDL (277 aa). E71 functions as the Proton acceptor in the catalytic mechanism. The Proton donor role is filled by K162. Catalysis depends on C196, which acts as the Nucleophile.

The protein belongs to the carbon-nitrogen hydrolase superfamily. Nitrilase family.

The catalysed reaction is a nitrile + 2 H2O = a carboxylate + NH4(+). It carries out the reaction 3-cyano-L-alanine + 2 H2O = L-aspartate + NH4(+). In terms of biological role, highly specific for beta-cyano-L-alanine (Ala(CN)). Low activity with 3-phenylpropionitrile (PPN). Not associated with auxin production but may be involved in cyanide detoxification. This is Bifunctional nitrilase/nitrile hydratase NIT4 (NIT4) from Oryza sativa subsp. japonica (Rice).